Reading from the N-terminus, the 451-residue chain is Inositol-pentakisphosphate 2-kinase (451 aa).

Met1 carries the post-translational modification N-acetylmethionine. ATP-binding positions include 19–22 (GGAN) and Arg40. Residues Arg45 and Arg130 each contribute to the substrate site. ATP-binding positions include 147–149 (NDH) and 166–168 (EIK). Residues 166 to 170 (EIKPK) carry the EXKPK motif motif. Lys170, Lys200, and Asn238 together coordinate substrate. Arg241 contributes to the ATP binding site. 4 residues coordinate Zn(2+): His320, Cys330, Cys333, and His346. Asp368 is a substrate binding site. Asp407 contributes to the ATP binding site. Substrate contacts are provided by Lys411, Arg415, and Tyr419.

Belongs to the IPK1 type 2 family. The cofactor is Zn(2+). In terms of tissue distribution, strongly expressed in leaves and cauline leaves. Weakly expressed in siliques and flowers. In flower, it is expressed in the major organs of developing flower buds. Strongly expressed in sepals, petals, in the male and female organs of immature and mature flower buds. Strongly expressed in the gynoecium and carpels which are fused to form the gynoecium. Also expressed in the transmitting tissue and ovules.

It carries out the reaction 1D-myo-inositol 1,3,4,5,6-pentakisphosphate + ATP = 1D-myo-inositol hexakisphosphate + ADP + H(+). Its function is as follows. Phosphorylates Ins(1,3,4,5,6)P5 at position 2 to form Ins(1,2,3,4,5,6)P6 (InsP6 or phytate). Phytate is a regulator of intracellular signaling, a highly abundant animal antinutrient, and a phosphate store in plant seeds. Also phosphorylates Ins(1,3,4,6)P4 and Ins(1,4,5,6)P4 to produce Ins(1,2,3,4,6)P5 and Ins(1,2,4,5,6)P5. The sequence is that of Inositol-pentakisphosphate 2-kinase (IPK1) from Arabidopsis thaliana (Mouse-ear cress).